A 490-amino-acid chain; its full sequence is Cobyric acid synthase (490 aa).

A GATase cobBQ-type domain is found at arginine 252 to alanine 439. The Nucleophile role is filled by cysteine 333. The active site involves histidine 431.

This sequence belongs to the CobB/CobQ family. CobQ subfamily.

The protein operates within cofactor biosynthesis; adenosylcobalamin biosynthesis. In terms of biological role, catalyzes amidations at positions B, D, E, and G on adenosylcobyrinic A,C-diamide. NH(2) groups are provided by glutamine, and one molecule of ATP is hydrogenolyzed for each amidation. This chain is Cobyric acid synthase, found in Pseudomonas paraeruginosa (strain DSM 24068 / PA7) (Pseudomonas aeruginosa (strain PA7)).